Consider the following 164-residue polypeptide: UPF0114 protein YqhA (164 aa).

3 helical membrane-spanning segments follow: residues Leu15–Phe35, Leu53–Val73, and Leu136–Leu156.

Belongs to the UPF0114 family.

Its subcellular location is the cell membrane. This chain is UPF0114 protein YqhA, found in Salmonella agona (strain SL483).